A 196-amino-acid polypeptide reads, in one-letter code: Putative NADH dehydrogenase/NAD(P)H nitroreductase SCO5049 (196 aa).

Belongs to the nitroreductase family. HadB/RutE subfamily. The cofactor is FMN.

In Streptomyces coelicolor (strain ATCC BAA-471 / A3(2) / M145), this protein is Putative NADH dehydrogenase/NAD(P)H nitroreductase SCO5049.